Here is a 448-residue protein sequence, read N- to C-terminus: Probable D-serine dehydratase (448 aa).

K111 is subject to N6-(pyridoxal phosphate)lysine.

The protein belongs to the serine/threonine dehydratase family. DsdA subfamily. It depends on pyridoxal 5'-phosphate as a cofactor.

It carries out the reaction D-serine = pyruvate + NH4(+). The sequence is that of Probable D-serine dehydratase from Rhizobium etli (strain CIAT 652).